Consider the following 859-residue polypeptide: Nitrate reductase [NADPH] (859 aa).

C137 provides a ligand contact to Mo-molybdopterin. The region spanning 502-578 (DVVIKYSEFE…LPSMHLGRLE (77 aa)) is the Cytochrome b5 heme-binding domain. Heme-binding residues include H538 and H561. The 112-residue stretch at 602 to 713 (RKWHKITLAE…KGPVGEFEYV (112 aa)) folds into the FAD-binding FR-type domain. Residues 655 to 658 (RAYT), 672 to 676 (LIKVY), F677, 687 to 689 (IMT), S737, and T740 each bind FAD. Residue 829-838 (MLLVCGPPGM) participates in NADP(+) binding.

It belongs to the nitrate reductase family. As to quaternary structure, homodimer. FAD serves as cofactor. Heme is required as a cofactor. It depends on Mo-molybdopterin as a cofactor.

The catalysed reaction is nitrite + NADP(+) + H2O = nitrate + NADPH + H(+). In terms of biological role, nitrate reductase is a key enzyme involved in the first step of nitrate assimilation in plants, fungi and bacteria. The polypeptide is Nitrate reductase [NADPH] (YNR1) (Pichia angusta (Yeast)).